We begin with the raw amino-acid sequence, 741 residues long: Catalase-peroxidase 2 (741 aa).

A signal peptide spans 1–28 (MQRNRIAKSVLAALAVIAMSAGSISARA). The tryptophyl-tyrosyl-methioninium (Trp-Tyr) (with M-254) cross-link spans 107–228 (WHGAGTYRTY…LAATQMGLIY (122 aa)). His-108 (proton acceptor) is an active-site residue. Positions 228-254 (YVNPEGPNGNPDPVAAAQDIREAFGRM) form a cross-link, tryptophyl-tyrosyl-methioninium (Tyr-Met) (with W-107). His-269 contacts heme b.

The protein belongs to the peroxidase family. Peroxidase/catalase subfamily. In terms of assembly, homodimer or homotetramer. The cofactor is heme b. In terms of processing, formation of the three residue Trp-Tyr-Met cross-link is important for the catalase, but not the peroxidase activity of the enzyme.

It carries out the reaction H2O2 + AH2 = A + 2 H2O. The enzyme catalyses 2 H2O2 = O2 + 2 H2O. Functionally, bifunctional enzyme with both catalase and broad-spectrum peroxidase activity. This chain is Catalase-peroxidase 2, found in Burkholderia vietnamiensis (strain G4 / LMG 22486) (Burkholderia cepacia (strain R1808)).